We begin with the raw amino-acid sequence, 82 residues long: Translational regulator CsrA (82 aa).

It belongs to the CsrA/RsmA family. As to quaternary structure, homodimer; the beta-strands of each monomer intercalate to form a hydrophobic core while the alpha-helices form wings that extend away from the core. Each of the alpha-helical wings interacts with an FliW monomer, yielding a FliW-CsrA(2)-FliW complex.

It is found in the cytoplasm. Functionally, a translational regulator that binds mRNA to regulate translation initiation and/or mRNA stability. Usually binds in the 5'-UTR at or near the Shine-Dalgarno sequence preventing ribosome-binding, thus repressing translation. Its main target seems to be the major flagellin gene, while its function is anatagonized by FliW. The sequence is that of Translational regulator CsrA from Geobacillus thermodenitrificans (strain NG80-2).